The primary structure comprises 463 residues: Glutamate--tRNA ligase (463 aa).

Residues 10–20 carry the 'HIGH' region motif; it reads PSPTGHLHIGG. The 'KMSKS' region motif lies at 236-240; the sequence is KLSKR. Lys-239 serves as a coordination point for ATP.

The protein belongs to the class-I aminoacyl-tRNA synthetase family. Glutamate--tRNA ligase type 1 subfamily. Monomer.

Its subcellular location is the cytoplasm. The catalysed reaction is tRNA(Glu) + L-glutamate + ATP = L-glutamyl-tRNA(Glu) + AMP + diphosphate. Its function is as follows. Catalyzes the attachment of glutamate to tRNA(Glu) in a two-step reaction: glutamate is first activated by ATP to form Glu-AMP and then transferred to the acceptor end of tRNA(Glu). This Nitratidesulfovibrio vulgaris (strain ATCC 29579 / DSM 644 / CCUG 34227 / NCIMB 8303 / VKM B-1760 / Hildenborough) (Desulfovibrio vulgaris) protein is Glutamate--tRNA ligase.